Reading from the N-terminus, the 257-residue chain is MNPLIIKLGGVLLDSEEALERLFTALVAYRQEHQRPLVIVHGGGCLVDDLMKKLSLPVVKKNGLRVTPADQIDIITGALAGSANKTLLSWAKKHDINAVGLCLGDGGSTTVTQLDEALGFVGKAEAGSPALLNTLLSAGYLPVVSSIGITAQGDLMNVNADQAATALAQTLGADLILLSDVSGILDGKGQRIAEMTAEKAEQLIAQGIITDGMIVKVNAALDAARALGRPVDIASWRHAEQLPALFNGVAIGTRILA.

Substrate contacts are provided by residues 43 to 44 (GG), R65, and N157. Residues 180-185 (DVSGIL) and 208-210 (IIT) each bind ATP.

It belongs to the acetylglutamate kinase family. ArgB subfamily. In terms of assembly, homodimer.

Its subcellular location is the cytoplasm. It carries out the reaction N-acetyl-L-glutamate + ATP = N-acetyl-L-glutamyl 5-phosphate + ADP. The protein operates within amino-acid biosynthesis; L-arginine biosynthesis; N(2)-acetyl-L-ornithine from L-glutamate: step 2/4. Its function is as follows. Catalyzes the ATP-dependent phosphorylation of N-acetyl-L-glutamate. The polypeptide is Acetylglutamate kinase (Pectobacterium carotovorum subsp. carotovorum (strain PC1)).